The primary structure comprises 793 residues: DNA mismatch repair protein MutS (793 aa).

589-596 contributes to the ATP binding site; it reads GPNMSGKS.

This sequence belongs to the DNA mismatch repair MutS family.

This protein is involved in the repair of mismatches in DNA. It is possible that it carries out the mismatch recognition step. This protein has a weak ATPase activity. In Thermotoga sp. (strain RQ2), this protein is DNA mismatch repair protein MutS.